Reading from the N-terminus, the 98-residue chain is Small ribosomal subunit protein bS6 (98 aa).

This sequence belongs to the bacterial ribosomal protein bS6 family.

Binds together with bS18 to 16S ribosomal RNA. This is Small ribosomal subunit protein bS6 from Levilactobacillus brevis (strain ATCC 367 / BCRC 12310 / CIP 105137 / JCM 1170 / LMG 11437 / NCIMB 947 / NCTC 947) (Lactobacillus brevis).